Consider the following 648-residue polypeptide: RAF proto-oncogene serine/threonine-protein kinase (648 aa).

Residue serine 29 is modified to Phosphoserine; by MAPK1. The residue at position 43 (serine 43) is a Phosphoserine; by PKA and MAPK1. Residues asparagine 56 to leucine 131 enclose the RBD domain. Residues threonine 138 to cysteine 184 form a Phorbol-ester/DAG-type zinc finger. 8 residues coordinate Zn(2+): histidine 139, cysteine 152, cysteine 155, cysteine 165, cysteine 168, histidine 173, cysteine 176, and cysteine 184. The tract at residues glycine 205–methionine 265 is disordered. Phosphoserine; by PKA is present on serine 233. A compositionally biased stretch (polar residues) spans threonine 239–methionine 265. Serine 252 is modified (phosphoserine). Serine 259 carries the phosphoserine; by PKA, PKC and PKB/AKT1 modification. Threonine 268 is subject to Phosphothreonine; by autocatalysis. Position 269 is a phosphothreonine; by PKA (threonine 269). The segment at isoleucine 281 to glutamine 335 is disordered. A compositionally biased stretch (low complexity) spans glutamate 286 to serine 301. Phosphoserine; by MAPK1 occurs at positions 289, 296, and 301. Residues arginine 331–valine 349 form an interaction with PEBP1/RKIP region. Serine 338 is modified (phosphoserine; by PAK1, PAK2, PAK3 and PAK5). Phosphoserine; by PAK1, PAK2 and PAK3 is present on serine 339. Phosphotyrosine; by SRC occurs at positions 340 and 341. One can recognise a Protein kinase domain in the interval valine 349–leucine 609. ATP is bound by residues isoleucine 355–valine 363 and lysine 375. Aspartate 468 serves as the catalytic Proton acceptor. Phosphoserine is present on serine 471. Threonine 491 bears the Phosphothreonine mark. Serine 494 is subject to Phosphoserine. A phosphoserine; by PKC mark is found at serine 497 and serine 499. Arginine 563 carries the post-translational modification Symmetric dimethylarginine; by PRMT5. At serine 621 the chain carries Phosphoserine. Position 642 is a phosphoserine; by MAPK1 (serine 642).

The protein belongs to the protein kinase superfamily. TKL Ser/Thr protein kinase family. RAF subfamily. Monomer. Homodimer. Heterodimerizes with BRAF and this heterodimer possesses a highly increased kinase activity compared to the respective homodimers or monomers. Heterodimerization is mitogen-regulated and enhanced by 14-3-3 proteins. MAPK1/ERK2 activation can induce a negative feedback that promotes the dissociation of the heterodimer. Forms a multiprotein complex with Ras (M-Ras/MRAS), SHOC2 and protein phosphatase 1 (PPP1CA, PPP1CB and PPP1CC). Interacts with LZTR1. Interacts with Ras proteins; the interaction is antagonized by RIN1. Weakly interacts with RIT1. Interacts (via N-terminus) with RGS14 (via RBD domains); the interaction mediates the formation of a ternary complex with BRAF, a ternary complex inhibited by GNAI1. Probably forms a complex composed of chaperones HSP90 and HSP70, co-chaperones CDC37, PPP5C, TSC1 and client protein TSC2, CDK4, AKT, RAF1 and NR3C1; this complex does not contain co-chaperones STIP1/HOP and PTGES3/p23. Interacts with STK3/MST2; the interaction inhibits its pro-apoptotic activity. Interacts (when phosphorylated at Ser-259) with YWHAZ (unphosphorylated at 'Thr-232'). Interacts with MAP2K1/MEK1 and MAP2K2/MEK2. Interacts with MAP3K5/ASF1 (via N-terminus) and this interaction inhibits the proapoptotic function of MAP3K5/ASK1. Interacts with PAK1 (via kinase domain). The Ser-338 and Ser-339 phosphorylated form (by PAK1) interacts with BCL2. Interacts with PEBP1/RKIP and this interaction is enhanced if RAF1 is phosphorylated on residues Ser-338, Ser-339, Tyr-340 and Tyr-341. Interacts with ADCY2, ADCY5, ADCY6, DGKH, RCAN1/DSCR1, PPP1R12A, PKB/AKT1, SPRY2, SPRY4, CNKSR1/CNK1, KSR2 and PHB/prohibitin. The phosphorylated form interacts with PIN1. Interacts with PPP2CA, PPP2R1B and ROCK2. In its active form, interacts with PRMT5. Interacts with FAM83B; displaces 14-3-3 proteins from RAF1 and activates RAF1. Interacts with PDE8A; the interaction promotes RAF1 activity. Interacts with MFHAS1. Interacts with GLS. Interacts with NEK10 and MAP2K1; the interaction is direct with NEK10 and required for ERK1/2-signaling pathway activation in response to UV irradiation. Zn(2+) serves as cofactor. Phosphorylation at Thr-269, Ser-338, Tyr-341, Thr-491 and Ser-494 results in its activation. Phosphorylation at Ser-29, Ser-43, Ser-289, Ser-296, Ser-301 and Ser-642 by MAPK1/ERK2 results in its inactivation. Phosphorylation at Ser-259 induces the interaction with YWHAZ and inactivates kinase activity. Dephosphorylation of Ser-259 by the SHOC2-MRAS-PP1c (SMP) complex consisting of SHOC2, GTP-bound M-Ras/MRAS and the catalytic subunit of protein phosphatase 1 (PPP1CA, PPP1CB or PPP1CC); this relieves inactivation and stimulates kinase activity. Phosphorylation at Ser-338 by PAK1 and PAK5 and Ser-339 by PAK1 is required for its mitochondrial localization. Phosphorylation at Ser-621 in response to growth factor treatment stabilizes the protein, possibly by preventing proteasomal degradation. Phosphorylation at Ser-289, Ser-296, Ser-301, Ser-338 and Ser-621 are somehow linked to the methylation potential of cells. Treatment of cells with HGF in the presence of the methylation inhibitor 5'-methylthioadenosine (MTA) results in increased phosphorylation at Ser-338 and Ser-621 and decreased phosphorylation at Ser-296, Ser-301 and Ser-338. Dephosphorylation at Ser-338 by PPP5C results in a decreased of activity. In terms of processing, methylated at Arg-563 in response to EGF treatment. This modification leads to destabilization of the protein, possibly through proteasomal degradation. In terms of tissue distribution, present in all tissues tested: testis, ovary, small intestine, colon, peripheral blood leukocytes, fetal liver, bone marrow, thymus, lymph node and spleen, and the cell lines melanoma G-361, lung carcinoma A-549, colorectal adenocarcinoma SW480, Burkitt's lymphoma Raji and lymphoblastic leukemia MOLT-4. In skeletal muscle, isoform 1 is more abundant than isoform 2.

It localises to the cytoplasm. The protein resides in the cell membrane. Its subcellular location is the mitochondrion. The protein localises to the nucleus. It carries out the reaction L-seryl-[protein] + ATP = O-phospho-L-seryl-[protein] + ADP + H(+). It catalyses the reaction L-threonyl-[protein] + ATP = O-phospho-L-threonyl-[protein] + ADP + H(+). Regulation is a highly complex process involving membrane recruitment, protein-protein interactions, dimerization, and phosphorylation/dephosphorylation events. Ras-GTP recruits RAF1 to the membrane, thereby promoting its activation. The inactive conformation of RAF1 is maintained by autoinhibitory interactions occurring between the N-terminal regulatory and the C-terminal catalytic domains and by the binding of a 14-3-3 protein that contacts two phosphorylation sites, Ser-259 and Ser-621. Upon mitogenic stimulation, Ras and PPP2R1A cooperate to release autoinhibition and the subsequent phosphorylation of activating sites: Ser-338, Tyr-341, Thr-491, and Ser-494, yields a fully active kinase. Through a negative feedback mechanism involving MAPK1/ERK2, RAF1 is phosphorylated on Ser-29, Ser-43, Ser-289, Ser-296, Ser-301 and Ser-642 by MAPK1/ERK2, which yields an inactive, desensitized kinase. The signaling-competent conformation of RAF1 is finally re-established by the coordinated action of PIN1, a prolyl isomerase that converts pSer and pThr residues from the cis to the trans conformation, which is preferentially recognized and dephosphorylated by PPP2R1A. Activated by homodimerization and heterodimerization (with BRAF). Also regulated through association with other proteins such as KSR2, CNKSR1/CNK1, PEBP1/RKIP, PHB/prohibitin and SPRY4. PEBP1/RKIP acts by dissociating RAF1 from its substrates MAP2K1/MEK1 and MAP2K2/MEK2. PHB/prohibitin facilitates the displacement of 14-3-3 from RAF1 by activated Ras, thereby promoting cell membrane localization and phosphorylation of RAF1 at the activating Ser-338. SPRY4 inhibits Ras-independent, but not Ras-dependent, activation of RAF1. CNKSR1/CNK1 regulates Src-mediated RAF1 activation. Serine/threonine-protein kinase that acts as a regulatory link between the membrane-associated Ras GTPases and the MAPK/ERK cascade, and this critical regulatory link functions as a switch determining cell fate decisions including proliferation, differentiation, apoptosis, survival and oncogenic transformation. RAF1 activation initiates a mitogen-activated protein kinase (MAPK) cascade that comprises a sequential phosphorylation of the dual-specific MAPK kinases (MAP2K1/MEK1 and MAP2K2/MEK2) and the extracellular signal-regulated kinases (MAPK3/ERK1 and MAPK1/ERK2). The phosphorylated form of RAF1 (on residues Ser-338 and Ser-339, by PAK1) phosphorylates BAD/Bcl2-antagonist of cell death at 'Ser-75'. Phosphorylates adenylyl cyclases: ADCY2, ADCY5 and ADCY6, resulting in their activation. Phosphorylates PPP1R12A resulting in inhibition of the phosphatase activity. Phosphorylates TNNT2/cardiac muscle troponin T. Can promote NF-kB activation and inhibit signal transducers involved in motility (ROCK2), apoptosis (MAP3K5/ASK1 and STK3/MST2), proliferation and angiogenesis (RB1). Can protect cells from apoptosis also by translocating to the mitochondria where it binds BCL2 and displaces BAD/Bcl2-antagonist of cell death. Plays a role in the oncogenic transformation of epithelial cells via repression of the TJ protein, occludin (OCLN) by inducing the up-regulation of a transcriptional repressor SNAI2/SLUG, which induces down-regulation of OCLN. Restricts caspase activation in response to selected stimuli, notably Fas stimulation, pathogen-mediated macrophage apoptosis, and erythroid differentiation. Regulates Rho signaling and migration, and is required for normal wound healing. The protein is RAF proto-oncogene serine/threonine-protein kinase (Raf1) of Mus musculus (Mouse).